A 387-amino-acid chain; its full sequence is Eukaryotic translation initiation factor 3 subunit M (387 aa).

The PCI domain occupies 181–340 (LSSKVMIELL…RKVHISSTMH (160 aa)).

Belongs to the eIF-3 subunit M family. In terms of assembly, component of the eukaryotic translation initiation factor 3 (eIF-3) complex. The eIF-3 complex interacts with pix.

Its subcellular location is the cytoplasm. The protein resides in the golgi apparatus. Its function is as follows. Component of the eukaryotic translation initiation factor 3 (eIF-3) complex, which is involved in protein synthesis of a specialized repertoire of mRNAs and, together with other initiation factors, stimulates binding of mRNA and methionyl-tRNAi to the 40S ribosome. The eIF-3 complex specifically targets and initiates translation of a subset of mRNAs involved in cell proliferation. The chain is Eukaryotic translation initiation factor 3 subunit M from Drosophila pseudoobscura pseudoobscura (Fruit fly).